A 938-amino-acid chain; its full sequence is Histone deacetylase 7 (938 aa).

Positions methionine 1–alanine 40 are disordered. Positions methionine 1–glutamine 121 are interaction with MEF2C. 2 transcription repression regions span residues histidine 2–arginine 254 and glycine 241–glycine 533. The segment at serine 72–proline 172 is interaction with MEF2A. Serine 132 is modified (phosphoserine). 4 disordered regions span residues serine 155 to leucine 280, serine 331 to glutamine 361, leucine 373 to leucine 463, and arginine 472 to glutamate 491. Serine 178 carries the phosphoserine; by MARK2, MARK3 and PKD/PRKD1 modification. Residues lysine 190–serine 204 show a composition bias toward basic and acidic residues. Serine 204 is modified (phosphoserine; by PKD/PRKD2). A compositionally biased stretch (low complexity) spans serine 220–proline 235. A Phosphoserine; by PKD/PRKD1 modification is found at serine 344. Serine 350 and serine 398 each carry phosphoserine. Positions serine 350–glutamine 361 are enriched in low complexity. 2 stretches are compositionally biased toward low complexity: residues glycine 429–histidine 448 and serine 479–glutamate 491. A Phosphoserine; by PKD/PRKD1 modification is found at serine 479. Position 480 is a phosphoserine (serine 480). Residues proline 505–aspartate 852 are histone deacetylase. The Zn(2+) site is built by cysteine 520, cysteine 522, and histidine 528. Serine 582 is subject to Phosphoserine. Cysteine 605 provides a ligand contact to Zn(2+). Residue histidine 657 is part of the active site. The segment at asparagine 864–leucine 938 is interaction with SIN3A. A Nuclear export signal motif is present at residues alanine 904–leucine 938.

It belongs to the histone deacetylase family. HD type 2 subfamily. Interacts with HDAC1, HDAC2, HDAC3, HDAC4, HDAC5, NCOR1, NCOR2, SIN3A, SIN3B, RBBP4, RBBP7, MTA1L1, SAP30 and MBD3. Interacts with KAT5 and EDNRA. Interacts with the 14-3-3 protein YWHAE, MEF2A, MEF2B and MEF2C. Interacts with ZMYND15. Interacts with KDM5B. Interacts with PML. Interacts with FOXP3. Interacts with RARA. Post-translationally, may be phosphorylated by CaMK1. Phosphorylated by the PKC kinases PKN1 and PKN2, impairing nuclear import. Phosphorylation at Ser-178 by MARK2, MARK3 and PRKD1 promotes interaction with 14-3-3 proteins and export from the nucleus. Phosphorylation at Ser-178 is a prerequisite for phosphorylation at Ser-204. As to expression, highly expressed in heart and lung. Expressed at intermediate level in muscle.

Its subcellular location is the nucleus. It is found in the cytoplasm. The catalysed reaction is N(6)-acetyl-L-lysyl-[histone] + H2O = L-lysyl-[histone] + acetate. The enzyme catalyses N(6)-acetyl-L-lysyl-[protein] + H2O = L-lysyl-[protein] + acetate. With respect to regulation, its activity is inhibited by Trichostatin A (TSA), a known histone deacetylase inhibitor. Functionally, responsible for the deacetylation of lysine residues on the N-terminal part of the core histones (H2A, H2B, H3 and H4). Histone deacetylation gives a tag for epigenetic repression and plays an important role in transcriptional regulation, cell cycle progression and developmental events. Histone deacetylases act via the formation of large multiprotein complexes. Involved in muscle maturation by repressing transcription of myocyte enhancer factors such as MEF2A, MEF2B and MEF2C. During muscle differentiation, it shuttles into the cytoplasm, allowing the expression of myocyte enhancer factors. Positively regulates the transcriptional repressor activity of FOXP3. Serves as a corepressor of RARA, causing its deacetylation and inhibition of RARE DNA element binding. In association with RARA, plays a role in the repression of microRNA-10a and thereby in the inflammatory response. Also acetylates non-histone proteins, such as ALKBH5. The chain is Histone deacetylase 7 (Hdac7) from Mus musculus (Mouse).